A 75-amino-acid polypeptide reads, in one-letter code: Probable protein BRICK1-B (75 aa).

Residues methionine 41–glutamate 72 are a coiled coil.

It belongs to the BRK1 family.

The protein localises to the cytoplasm. It is found in the cytoskeleton. Involved in regulation of actin and microtubule organization. Part of a WAVE complex that activates the Arp2/3 complex. The protein is Probable protein BRICK1-B (brk1-b) of Xenopus laevis (African clawed frog).